Consider the following 200-residue polypeptide: Holliday junction branch migration complex subunit RuvA (200 aa).

Positions 1–63 (MIASVRGVVT…EDSLTLYGFA (63 aa)) are domain I. The tract at residues 64-142 (DDNAKALFEL…PVPVGGDGAA (79 aa)) is domain II. Residues 143–151 (GVTTGAWPE) form a flexible linker region. The segment at 151-200 (EQVRQALVGLGWTAGQAEQAVAAVAETVDGEVPPVPVLLRQAIRLLGRTR) is domain III.

It belongs to the RuvA family. As to quaternary structure, homotetramer. Forms an RuvA(8)-RuvB(12)-Holliday junction (HJ) complex. HJ DNA is sandwiched between 2 RuvA tetramers; dsDNA enters through RuvA and exits via RuvB. An RuvB hexamer assembles on each DNA strand where it exits the tetramer. Each RuvB hexamer is contacted by two RuvA subunits (via domain III) on 2 adjacent RuvB subunits; this complex drives branch migration. In the full resolvosome a probable DNA-RuvA(4)-RuvB(12)-RuvC(2) complex forms which resolves the HJ.

It localises to the cytoplasm. The RuvA-RuvB-RuvC complex processes Holliday junction (HJ) DNA during genetic recombination and DNA repair, while the RuvA-RuvB complex plays an important role in the rescue of blocked DNA replication forks via replication fork reversal (RFR). RuvA specifically binds to HJ cruciform DNA, conferring on it an open structure. The RuvB hexamer acts as an ATP-dependent pump, pulling dsDNA into and through the RuvAB complex. HJ branch migration allows RuvC to scan DNA until it finds its consensus sequence, where it cleaves and resolves the cruciform DNA. This is Holliday junction branch migration complex subunit RuvA from Salinispora arenicola (strain CNS-205).